We begin with the raw amino-acid sequence, 30 residues long: Cytochrome c3, 50 kDa (30 aa).

As to quaternary structure, monomer. Binds 4 heme groups per subunit.

It is found in the periplasm. In terms of biological role, participates in sulfate respiration coupled with phosphorylation by transferring electrons from the enzyme dehydrogenase to ferredoxin. This is Cytochrome c3, 50 kDa from Desulfuromonas acetoxidans (Chloropseudomonas ethylica).